The chain runs to 122 residues: Large ribosomal subunit protein uL14 (122 aa).

This sequence belongs to the universal ribosomal protein uL14 family. Part of the 50S ribosomal subunit. Forms a cluster with proteins L3 and L19. In the 70S ribosome, L14 and L19 interact and together make contacts with the 16S rRNA in bridges B5 and B8.

Functionally, binds to 23S rRNA. Forms part of two intersubunit bridges in the 70S ribosome. This is Large ribosomal subunit protein uL14 from Mycobacteroides abscessus (strain ATCC 19977 / DSM 44196 / CCUG 20993 / CIP 104536 / JCM 13569 / NCTC 13031 / TMC 1543 / L948) (Mycobacterium abscessus).